We begin with the raw amino-acid sequence, 267 residues long: Chlorophyll a-b binding protein 3A, chloroplastic (267 aa).

A chloroplast-targeting transit peptide spans 1–34; sequence MAASTMALSSSTFAGKTVKLAPSSSEITGNGRIT. Residues 153–173 traverse the membrane as a helical segment; that stretch reads LVHAQSILAIWACQVVLMGAV. 6 residues coordinate chlorophyll b: V154, S158, Q166, E174, R177, and L183. Chlorophyll a is bound by residues K214, E215, N218, R220, Q232, H247, and A256. A helical transmembrane segment spans residues 221-241; sequence LAMFSMFGFFVQAIVTGKGPL. Position 263 (F263) interacts with chlorophyll b.

This sequence belongs to the light-harvesting chlorophyll a/b-binding (LHC) protein family. As to quaternary structure, the LHC complex consists of chlorophyll a-b binding proteins. Requires Binds at least 14 chlorophylls (8 Chl-a and 6 Chl-b) and carotenoids such as lutein and neoxanthin. as cofactor. Photoregulated by reversible phosphorylation of its threonine residues.

It localises to the plastid. The protein resides in the chloroplast thylakoid membrane. In terms of biological role, the light-harvesting complex (LHC) functions as a light receptor, it captures and delivers excitation energy to photosystems with which it is closely associated. The protein is Chlorophyll a-b binding protein 3A, chloroplastic (CAB3A) of Solanum lycopersicum (Tomato).